The primary structure comprises 85 residues: Progonadoliberin-2 (85 aa).

The first 23 residues, 1-23 (MCVSRLVLLFGLLLCVGAQLSNA), serve as a signal peptide directing secretion. Q24 is modified (pyrrolidone carboxylic acid). The residue at position 33 (G33) is a Glycine amide.

It belongs to the GnRH family.

It is found in the secreted. Stimulates the secretion of gonadotropins. This chain is Progonadoliberin-2 (gnrh2), found in Morone saxatilis (Striped bass).